The following is an 868-amino-acid chain: Transcription factor pynR (868 aa).

Positions 11–37 (CTFCRTRKIACSGERICNACRSRSIEC) form a DNA-binding region, zn(2)-C6 fungal-type. Disordered regions lie at residues 51 to 88 (NKTT…TSAV), 662 to 683 (LSGS…LDLS), 715 to 761 (SGIP…ASDL), and 829 to 868 (GMGE…GMSN). 2 stretches are compositionally biased toward low complexity: residues 663-683 (SGSR…LDLS) and 715-727 (SGIP…SISH).

The protein localises to the nucleus. Functionally, transcription factor that regulates the expression of the gene cluster that mediates the biosynthesis of pyranonigrins, a family of antioxidative compounds. This is Transcription factor pynR from Aspergillus niger (strain ATCC MYA-4892 / CBS 513.88 / FGSC A1513).